A 355-amino-acid polypeptide reads, in one-letter code: Guanine nucleotide-binding protein G(o) subunit alpha (355 aa).

Positions 1-17 (MGCASSAEERAAPSAQQ) are enriched in low complexity. The interval 1 to 24 (MGCASSAEERAAPSAQQADREKLK) is disordered. The N-myristoyl glycine moiety is linked to residue G2. C3 carries S-palmitoyl cysteine lipidation. The region spanning 32–355 (KDIKLLLLGA…ANNLRGCGLY (324 aa)) is the G-alpha domain. A G1 motif region spans residues 35-48 (KLLLLGAGESGKST). Residues 40–47 (GAGESGKS), 176–182 (LRTRVKT), 201–205 (DVGRG), 201–206 (DVGRGQ), 271–274 (NKKD), and A327 contribute to the GTP site. S47 and T182 together coordinate Mg(2+). The G2 motif stretch occupies residues 174–182 (DILRTRVKT). Residues 197–206 (FKLFDVGRGQ) form a G3 motif region. Residues 267–274 (ILFLNKKD) form a G4 motif region. The tract at residues 326–330 (TATDT) is G5 motif.

This sequence belongs to the G-alpha family. G(i/o/t/z) subfamily. As to quaternary structure, g proteins are composed of 3 units; alpha, beta and gamma. The alpha chain contains the guanine nucleotide binding site.

Its function is as follows. Guanine nucleotide-binding proteins (G proteins) are involved as modulators or transducers in various transmembrane signaling systems. The G(o) protein function is not clear. This Manduca sexta (Tobacco hawkmoth) protein is Guanine nucleotide-binding protein G(o) subunit alpha.